Consider the following 229-residue polypeptide: Uracil-DNA glycosylase (229 aa).

The Proton acceptor role is filled by D65.

The protein belongs to the uracil-DNA glycosylase (UDG) superfamily. UNG family.

Its subcellular location is the cytoplasm. The catalysed reaction is Hydrolyzes single-stranded DNA or mismatched double-stranded DNA and polynucleotides, releasing free uracil.. Excises uracil residues from the DNA which can arise as a result of misincorporation of dUMP residues by DNA polymerase or due to deamination of cytosine. The sequence is that of Uracil-DNA glycosylase from Oceanobacillus iheyensis (strain DSM 14371 / CIP 107618 / JCM 11309 / KCTC 3954 / HTE831).